Reading from the N-terminus, the 317-residue chain is Zinc transporter ZIP3 (317 aa).

The Extracellular portion of the chain corresponds to 1–3; the sequence is MTK. A helical transmembrane segment spans residues 4–24; it reads LLVAKVLCMVGVFFFMLLGSL. The Cytoplasmic segment spans residues 25-42; it reads LPVKVIEADLEKAHRSKK. Residues 43 to 63 form a helical membrane-spanning segment; it reads VLSLCNTFGGGVFLATCFNAL. Residues 64–85 lie on the Extracellular side of the membrane; that stretch reads LPAVRDKLQQVLSLGHISTDYP. A helical transmembrane segment spans residues 86-106; it reads LAETLMMVGFFLTVFVEQLVL. Topologically, residues 107–172 are cytoplasmic; it reads TFRRERPPFI…RELGRPGPLR (66 aa). Residues S125 and S129 each carry the phosphoserine modification. A helical transmembrane segment spans residues 173 to 193; that stretch reads LLSLVFALSAHSVFEGLALGL. Topologically, residues 194 to 199 are extracellular; the sequence is QEEGER. The chain crosses the membrane as a helical span at residues 200–220; sequence VVSLFVGVAIHETLVAVALGI. At 221–232 the chain is on the cytoplasmic side; the sequence is SMARSAVPLRDA. A helical transmembrane segment spans residues 233–253; sequence AKLAVTVSAMIPVGIGLGLGI. The Extracellular segment spans residues 254 to 265; it reads ESARSVASSVAS. The chain crosses the membrane as a helical span at residues 266-286; the sequence is ALLQGLAGGTFLFVTFLEILA. Topologically, residues 287–294 are cytoplasmic; it reads KELEERSE. The chain crosses the membrane as a helical span at residues 295-315; that stretch reads QLLKVLFLVLGYAVLAGMVFL. Topologically, residues 316-317 are extracellular; it reads KW.

Belongs to the ZIP transporter (TC 2.A.5) family. In terms of tissue distribution, highly expressed in the testes. Highly expressed in dentate gyrus granule cells of the hippocampus. Expressed in the mammary gland.

Its subcellular location is the cell membrane. The protein resides in the apical cell membrane. The enzyme catalyses Zn(2+)(in) = Zn(2+)(out). Functionally, transporter for the divalent cation Zn(2+). Mediates the influx of Zn(2+) into cells from extracellular space. Controls Zn(2+) accumulation into dentate gyrus granule cells in the hippocampus. Mediates Zn(2+) reuptake from the secreted milk within the alveolar lumen. The chain is Zinc transporter ZIP3 (Slc39a3) from Mus musculus (Mouse).